The chain runs to 315 residues: Cobalamin biosynthesis protein CobD (315 aa).

5 consecutive transmembrane segments (helical) span residues 48–70, 75–94, 148–170, 208–230, and 292–314; these read IAGI…LSVQ, LHWI…TIAI, LVDG…AMLY, ITSY…SLYI, and LILL…AAYF.

This sequence belongs to the CobD/CbiB family.

It localises to the cell membrane. It functions in the pathway cofactor biosynthesis; adenosylcobalamin biosynthesis. Functionally, converts cobyric acid to cobinamide by the addition of aminopropanol on the F carboxylic group. This Leptospira interrogans serogroup Icterohaemorrhagiae serovar copenhageni (strain Fiocruz L1-130) protein is Cobalamin biosynthesis protein CobD.